We begin with the raw amino-acid sequence, 440 residues long: Cell division protein FtsA (440 aa).

The protein belongs to the FtsA/MreB family. As to quaternary structure, self-interacts. Interacts with FtsZ.

Its subcellular location is the cell membrane. Cell division protein that is involved in the assembly of the Z ring. May serve as a membrane anchor for the Z ring. This is Cell division protein FtsA from Enterococcus faecalis (strain ATCC 700802 / V583).